The primary structure comprises 537 residues: Synaptotagmin-2 (537 aa).

The Cytoplasmic portion of the chain corresponds to 1–2 (MG). Residues 3–23 (IISTILGVIGFGFGTTIGIVI) traverse the membrane as a helical segment. At 24 to 537 (GYYLFIYFQS…QIELQWRNSS (514 aa)) the chain is on the lumenal side. The region spanning 67–249 (DFDRIDWLNK…WPKTLNVQIM (183 aa)) is the SMP-LTD domain. The segment at 227–505 (QEIIKDQVAN…TLGYVVINLG (279 aa)) is phospholipid binding. C2 domains follow at residues 240-362 (WPKT…LMTL) and 402-517 (DPNA…NDKY). Residues Asp-276, Asp-282, Asp-332, and Glu-334 each contribute to the Ca(2+) site.

It belongs to the synaptotagmin family. Ca(2+) serves as cofactor.

It localises to the golgi apparatus membrane. Functionally, may play an important role in regulating an unconventional protein trafficking from the cytosol to the extracellular matrix. This Arabidopsis thaliana (Mouse-ear cress) protein is Synaptotagmin-2 (SYT2).